The sequence spans 209 residues: Chalcone isomerase-like protein 2 (209 aa).

Belongs to the chalcone isomerase family. In terms of assembly, component an active demethylxanthohumol (DMX) biosynthetic metabolon in glandular trichomes (lupulin glands) that encompasses a chalcone synthase (CHS) and a membrane-bound prenyltransferase. Interacts with CHS_H1 and PT1L. As to expression, mostly expressed in glandular trichomes (lupulin glands), and, to a lower extent, in cones, cones bracts, leaves, stems and roots.

Its subcellular location is the cytoplasm. The catalysed reaction is a chalcone = a flavanone.. The protein operates within secondary metabolite biosynthesis; flavonoid biosynthesis. Its function is as follows. Involved in the biosynthesis of prenylated phenolics natural products which contribute to the bitter taste of beer and display broad biological activities. Involved in anthocyanin biosynthesis. Polyketide binding proteins (PBP) which promotes the catalytic activities of CHS_H1 and PT1L and triggers demethylxanthohumol (DMX) production. The chain is Chalcone isomerase-like protein 2 from Humulus lupulus (European hop).